The chain runs to 193 residues: Ancillary SecYEG translocon subunit (193 aa).

Topologically, residues 1–11 (MIKNSYINEKL) are cytoplasmic. Residues 12–34 (NFYQKSFLTCMLLIVIVIVYFFS) form a helical membrane-spanning segment. The Extracellular segment spans residues 35–193 (KNYLDKPKNS…IIQMKINNYN (159 aa)).

The protein belongs to the YfgM family. In terms of assembly, interacts with the Sec translocon. Forms a complex with PpiD.

The protein localises to the cell membrane. Functionally, may mediate protein transfer from the Sec translocon to the chaperone network via its extracellular C-terminal region. The polypeptide is Ancillary SecYEG translocon subunit (Buchnera aphidicola subsp. Baizongia pistaciae (strain Bp)).